Reading from the N-terminus, the 405-residue chain is MSSVDILVPDLPESVADATVATWHKKPGDAVVRDEVLVEIETDKVVLEVPASADGILDAVLEDEGTTVTSRQILGRLREGNSAGKETSAKSEEKASTPAQRQQASLEEQNNDALSPAIRRLLAEHNLDASAIKGTGVGGRLTREDVEKHLAKAPAKESAPAAAAPAAQPALAARSEKRVPMTRLRKRVAERLLEAKNSTAMLTTFNEVNMKPIMDLRKQYGEAFEKRHGIRLGFMSFYVKAVVEALKRYPEVNASIDGDDVVYHNYFDVSMAVSTPRGLVTPVLRDVDTLGMADIEKKIKELAVKGRDGKLTVEDLTGGNFTITNGGVFGSLMSTPIINPPQSAILGMHAIKDRPMAVNGQVEILPMMYLALSYDHRLIDGRESVGFLVTIKELLEDPTRLLLDV.

Positions 3 to 78 constitute a Lipoyl-binding domain; sequence SVDILVPDLP…TSRQILGRLR (76 aa). The residue at position 44 (K44) is an N6-lipoyllysine. Positions 75–111 are disordered; the sequence is GRLREGNSAGKETSAKSEEKASTPAQRQQASLEEQNN. Over residues 97-111 the composition is skewed to polar residues; that stretch reads TPAQRQQASLEEQNN. A Peripheral subunit-binding (PSBD) domain is found at 113–150; that stretch reads ALSPAIRRLLAEHNLDASAIKGTGVGGRLTREDVEKHL. The residue at position 148 (K148) is an N6-acetyllysine. Residues 153–173 show a composition bias toward low complexity; it reads APAKESAPAAAAPAAQPALAA. The disordered stretch occupies residues 153–178; the sequence is APAKESAPAAAAPAAQPALAARSEKR. Catalysis depends on residues H376 and D380.

This sequence belongs to the 2-oxoacid dehydrogenase family. As to quaternary structure, forms a 24-polypeptide structural core with octahedral symmetry. Part of the 2-oxoglutarate dehydrogenase (OGDH) complex composed of E1 (2-oxoglutarate dehydrogenase), E2 (dihydrolipoamide succinyltransferase) and E3 (dihydrolipoamide dehydrogenase); the complex contains multiple copies of the three enzymatic components (E1, E2 and E3). Interacts with SucA (via N-terminus), the E1 component of OGDH complex. It depends on (R)-lipoate as a cofactor.

It carries out the reaction N(6)-[(R)-dihydrolipoyl]-L-lysyl-[protein] + succinyl-CoA = N(6)-[(R)-S(8)-succinyldihydrolipoyl]-L-lysyl-[protein] + CoA. The protein operates within amino-acid degradation; L-lysine degradation via saccharopine pathway; glutaryl-CoA from L-lysine: step 6/6. In terms of biological role, E2 component of the 2-oxoglutarate dehydrogenase (OGDH) complex which catalyzes the second step in the conversion of 2-oxoglutarate to succinyl-CoA and CO(2). The protein is Dihydrolipoyllysine-residue succinyltransferase component of 2-oxoglutarate dehydrogenase complex (sucB) of Escherichia coli O157:H7.